The primary structure comprises 285 residues: uncharacterized protein (285 aa).

The protein belongs to the methyltransferase superfamily.

This is an uncharacterized protein from Mycobacterium tuberculosis (strain CDC 1551 / Oshkosh).